Reading from the N-terminus, the 356-residue chain is Putative aminopeptidase FrvX (356 aa).

A divalent metal cation is bound by residues His61 and Asp175. Glu205 acts as the Proton acceptor in catalysis. A divalent metal cation contacts are provided by Glu206, Asp228, and His316.

This sequence belongs to the peptidase M42 family. It depends on a divalent metal cation as a cofactor.

The sequence is that of Putative aminopeptidase FrvX (frvX) from Escherichia coli (strain K12).